The chain runs to 149 residues: UPF0102 protein Bpro_0391 (149 aa).

Residues 1–30 (MWFSRKQVVKPPPDGSRAQPGQVTTKSRGD) are disordered.

This sequence belongs to the UPF0102 family.

The polypeptide is UPF0102 protein Bpro_0391 (Polaromonas sp. (strain JS666 / ATCC BAA-500)).